We begin with the raw amino-acid sequence, 206 residues long: Outer-membrane lipoprotein carrier protein (206 aa).

The signal sequence occupies residues 1-21 (MKKLLCAVLLSPLLYSNAVLA).

The protein belongs to the LolA family. Monomer.

It is found in the periplasm. Its function is as follows. Participates in the translocation of lipoproteins from the inner membrane to the outer membrane. Only forms a complex with a lipoprotein if the residue after the N-terminal Cys is not an aspartate (The Asp acts as a targeting signal to indicate that the lipoprotein should stay in the inner membrane). The protein is Outer-membrane lipoprotein carrier protein of Shewanella oneidensis (strain ATCC 700550 / JCM 31522 / CIP 106686 / LMG 19005 / NCIMB 14063 / MR-1).